Reading from the N-terminus, the 240-residue chain is Sugar fermentation stimulation protein homolog (240 aa).

Belongs to the SfsA family.

The polypeptide is Sugar fermentation stimulation protein homolog (Saccharolobus islandicus (strain M.16.4 / Kamchatka #3) (Sulfolobus islandicus)).